Reading from the N-terminus, the 521-residue chain is Glucosidase 2 subunit beta (521 aa).

The N-terminal stretch at 1–14 is a signal peptide; that stretch reads MLLLLLLLLPLCWA. S24 carries the phosphoserine modification. 2 consecutive LDL-receptor class A domains span residues 37–71 and 69–113; these read FTCLDGTATIPFDQVNDDYCDCKDGSDEPGTAACP and ACPN…TVCE. 2 disulfide bridges follow: C39/C58 and C56/C70. D49 is a binding site for substrate. 6 residues coordinate Ca(2+): Q50, D53, Y55, D57, D63, and E64. Substrate is bound at residue D53. An N-linked (GlcNAc...) asparagine glycan is attached at N72. Cystine bridges form between C77/C99, C97/C112, and C100/C116. Residue S89 is modified to Phosphoserine; by PKC. Residues R91, D94, V96, D98, D104, and E105 each contribute to the Ca(2+) site. K166 carries the post-translational modification N6-succinyllysine. S168 carries the phosphoserine modification. 2 EF-hand domains span residues 209–244 and 245–290; these read REQERAASAFQELDDNMDGMVSLAELQTHPELDTDG and DGAL…TDIP. Ca(2+) is bound by residues D222, N224, D226, M228, and E233. Disordered stretches follow at residues 226–267 and 280–350; these read DGMV…DTTS and YRSE…EKMP. Composition is skewed to acidic residues over residues 241–253 and 308–331; these read DTDGDGALSEEEA and TEEEEEEEEEPEEEEEEEEEEEEA. Positions 332–343 are enriched in pro residues; sequence PPPLQPPQPPSP. Phosphoserine; by PKC is present on residues S376 and S383. Residues 406-507 enclose the MRH domain; it reads SQCYELTTNE…ELMTPAACPE (102 aa). A disulfide bond links C408 and C421. At S427 the chain carries Phosphoserine; by PKC. 2 disulfides stabilise this stretch: C464/C493 and C478/C505. The N-linked (GlcNAc...) asparagine glycan is linked to N469. Positions 518-521 match the Prevents secretion from ER motif; the sequence is HDEL.

Heterodimer of a catalytic alpha subunit (GANAB) and a beta subunit (PRKCSH). Binds glycosylated PTPRC. In terms of tissue distribution, expressed in kidney (at protein level).

It localises to the endoplasmic reticulum. Its pathway is glycan metabolism; N-glycan metabolism. Regulatory subunit of glucosidase II that cleaves sequentially the 2 innermost alpha-1,3-linked glucose residues from the Glc(2)Man(9)GlcNAc(2) oligosaccharide precursor of immature glycoproteins. Required for efficient PKD1/Polycystin-1 biogenesis and trafficking to the plasma membrane of the primary cilia. This is Glucosidase 2 subunit beta from Mus musculus (Mouse).